The sequence spans 81 residues: Cytochrome b559 subunit alpha (81 aa).

Residues 21–35 (VIHSVTIPSLFVGGW) form a helical membrane-spanning segment. Heme is bound at residue His-23.

It belongs to the PsbE/PsbF family. Heterodimer of an alpha subunit and a beta subunit. PSII is composed of 1 copy each of membrane proteins PsbA, PsbB, PsbC, PsbD, PsbE, PsbF, PsbH, PsbI, PsbJ, PsbK, PsbL, PsbM, PsbT, PsbY, PsbZ, Psb30/Ycf12, at least 3 peripheral proteins of the oxygen-evolving complex and a large number of cofactors. It forms dimeric complexes. Heme b is required as a cofactor.

The protein resides in the plastid. The protein localises to the chloroplast thylakoid membrane. In terms of biological role, this b-type cytochrome is tightly associated with the reaction center of photosystem II (PSII). PSII is a light-driven water:plastoquinone oxidoreductase that uses light energy to abstract electrons from H(2)O, generating O(2) and a proton gradient subsequently used for ATP formation. It consists of a core antenna complex that captures photons, and an electron transfer chain that converts photonic excitation into a charge separation. The sequence is that of Cytochrome b559 subunit alpha from Euglena gracilis.